A 423-amino-acid polypeptide reads, in one-letter code: uncharacterized protein (423 aa).

Substrate-binding residues include S51, D138, and N150. Residues 170-171 (TD) and 214-220 (TGGMRTK) contribute to the ATP site. The PUA domain occupies 315–406 (KGAIIIDENS…EKIHDVLGYS (92 aa)).

It belongs to the glutamate 5-kinase family.

The protein localises to the cytoplasm. This is an uncharacterized protein from Saccharomyces cerevisiae (strain ATCC 204508 / S288c) (Baker's yeast).